The following is a 316-amino-acid chain: Transaldolase 1 (316 aa).

Lys131 serves as the catalytic Schiff-base intermediate with substrate.

The protein belongs to the transaldolase family. Type 1 subfamily. In terms of assembly, homodimer.

The protein resides in the cytoplasm. It carries out the reaction D-sedoheptulose 7-phosphate + D-glyceraldehyde 3-phosphate = D-erythrose 4-phosphate + beta-D-fructose 6-phosphate. It participates in carbohydrate degradation; pentose phosphate pathway; D-glyceraldehyde 3-phosphate and beta-D-fructose 6-phosphate from D-ribose 5-phosphate and D-xylulose 5-phosphate (non-oxidative stage): step 2/3. In terms of biological role, transaldolase is important for the balance of metabolites in the pentose-phosphate pathway. This is Transaldolase 1 from Pectobacterium atrosepticum (strain SCRI 1043 / ATCC BAA-672) (Erwinia carotovora subsp. atroseptica).